The sequence spans 66 residues: Large ribosomal subunit protein bL28 (66 aa).

The disordered stretch occupies residues 1–26 (MAKDAITGARTRFGNQRSHALNSSRR). The span at 13–25 (FGNQRSHALNSSR) shows a compositional bias: polar residues.

It belongs to the bacterial ribosomal protein bL28 family.

This Leuconostoc citreum (strain KM20) protein is Large ribosomal subunit protein bL28.